Consider the following 1609-residue polypeptide: Probable cation-transporting ATPase I (1609 aa).

10 helical membrane-spanning segments follow: residues 30 to 50 (GAVN…WPVV), 176 to 196 (LAIL…SAAV), 238 to 258 (IALS…GTPL), 357 to 377 (LIAA…AGAI), 641 to 661 (VHLA…ASAG), 673 to 693 (WFSP…VSAS), 778 to 798 (ILAV…ALLV), 921 to 941 (LFEG…ATGV), 969 to 989 (TSKV…LALL), and 997 to 1017 (AVAD…PLVA). Asp1053 functions as the 4-aspartylphosphate intermediate in the catalytic mechanism. Positions 1335 and 1339 each coordinate Mg(2+). 2 helical membrane-spanning segments follow: residues 1396-1416 (ILVG…VFGA) and 1426-1446 (LLLV…VTSQ). Positions 1447–1476 (YEEPGEDEYQTDEEADEARRTHQHEVLTGP) are disordered. Positions 1449–1462 (EPGEDEYQTDEEAD) are enriched in acidic residues. Helical transmembrane passes span 1542-1562 (VVAT…TPVI) and 1573-1593 (PIAW…SVLA).

The protein belongs to the cation transport ATPase (P-type) (TC 3.A.3) family.

It localises to the cell membrane. The enzyme catalyses ATP + H2O = ADP + phosphate + H(+). This is Probable cation-transporting ATPase I (ctpI) from Mycobacterium leprae (strain TN).